The following is a 221-amino-acid chain: Thiol:disulfide interchange protein TlpA (221 aa).

Residues 1 to 11 (MLDTKPSATRR) are Cytoplasmic-facing. The helical transmembrane segment at 12–35 (IPLVIATVAVGGLAGFAALYGLGL) threads the bilayer. The Periplasmic segment spans residues 36-221 (SRAPTGDPAC…AATGKAAAAL (186 aa)). 2 disulfides stabilise this stretch: cysteine 45–cysteine 190 and cysteine 107–cysteine 110. The Thioredoxin domain maps to 69 to 215 (ASAPLKLPDL…ALKLIRAATG (147 aa)).

Belongs to the thioredoxin family. In terms of assembly, monomer.

It is found in the cell membrane. Its function is as follows. Involved in cytochrome aa3 assembly. The polypeptide is Thiol:disulfide interchange protein TlpA (tlpA) (Bradyrhizobium diazoefficiens (strain JCM 10833 / BCRC 13528 / IAM 13628 / NBRC 14792 / USDA 110)).